The following is a 224-amino-acid chain: MSLKNLPSESMPREKLLQRGPQSLSDAELLAIFLRTGTQGMNVIELADFLLRDFGSLRKLFSADEQSFCRHKGLGQAKYVQLQAVLEMTQRYLAETLQRGDALTSPQHTKLYLSSMLRDRHREAFYVLFLDNQNRVIKDEVMFEGTIDAASVYPREVVKRALHYNAAALILAHNHPSGVAEPSQADRRITRRLSDALGLVDIRVLDHFVVGDGEVVSFAERGWI.

A disordered region spans residues 1–20 (MSLKNLPSESMPREKLLQRG). One can recognise an MPN domain in the interval 102-224 (ALTSPQHTKL…VVSFAERGWI (123 aa)). Zn(2+)-binding residues include histidine 173, histidine 175, and aspartate 186. Residues 173–186 (HNHPSGVAEPSQAD) carry the JAMM motif motif.

Belongs to the UPF0758 family.

In Vibrio vulnificus (strain CMCP6), this protein is UPF0758 protein VV1_0825.